We begin with the raw amino-acid sequence, 171 residues long: Protein FAM209A (171 aa).

The first 19 residues, 1–19 (MWTLKSSLVLLLCLTCSYA), serve as a signal peptide directing secretion. Over 20 to 52 (FMFSSLRQKTSEPQGKVQYGEHFRIRQNLPEHT) the chain is Extracellular. The chain crosses the membrane as a helical span at residues 53–73 (QGWLGSKWLWLLFVVVPFVIL). The Cytoplasmic segment spans residues 74–171 (QCQRDSEKNK…CEIWGEESSS (98 aa)). Positions 81 to 107 (KNKEQSPPGLRGGQLHSPLKKKRNASP) are disordered. A coiled-coil region spans residues 114 to 139 (NTLMELEVELMKFVSKVRNLKRAMAT).

Belongs to the FAM209 family. In terms of assembly, interacts with DPY19L2. Interacts with CYLC1; the interaction may be relevant for proper acrosome attachment to the nuclear envelope.

The protein localises to the nucleus inner membrane. Functionally, may play a role in sperm acrosome biogenesis. The protein is Protein FAM209A of Homo sapiens (Human).